The sequence spans 195 residues: NADH dehydrogenase [ubiquinone] iron-sulfur protein 3 (195 aa).

This sequence belongs to the complex I 30 kDa subunit family. In terms of assembly, complex I is composed of about 45 different subunits. This is a component of the iron-sulfur (IP) fragment of the enzyme.

Its subcellular location is the mitochondrion inner membrane. It carries out the reaction a ubiquinone + NADH + 5 H(+)(in) = a ubiquinol + NAD(+) + 4 H(+)(out). Its function is as follows. Core subunit of the mitochondrial membrane respiratory chain NADH dehydrogenase (Complex I) that is believed to belong to the minimal assembly required for catalysis. Complex I functions in the transfer of electrons from NADH to the respiratory chain. The immediate electron acceptor for the enzyme is believed to be ubiquinone. This Marchantia polymorpha (Common liverwort) protein is NADH dehydrogenase [ubiquinone] iron-sulfur protein 3 (NAD9).